A 690-amino-acid polypeptide reads, in one-letter code: Eukaryotic translation initiation factor 3 subunit B (690 aa).

Residues 1 to 11 (MAKKKSEDHSG) show a composition bias toward basic and acidic residues. The interval 1–37 (MAKKKSEDHSGGDANDSDYNEEPNFEDPPNFVDNISD) is disordered. A compositionally biased stretch (acidic residues) spans 15 to 25 (NDSDYNEEPNF). In terms of domain architecture, RRM spans 57-141 (SVVVVDNIPK…HTFAVNLFTD (85 aa)). 6 WD repeats span residues 207-246 (TRERFTDTFVKWSPLGTYVVTFHKPGVAIWGGSSFQKIQK), 247-289 (FPHT…EKRS), 293-331 (DGMSVLSMFRWSHDDKYVARMGDNSIHIYETPSFYLLDL), 334-369 (IKIPGIRGFSWSPTDNVIAYWVEEQNQIPARVTLME), 442-484 (EIRE…KPSL), and 530-575 (PDHF…IKRT). Residues 614–645 (QKDRLRLTRASKELLEKRSQLRETFMEYRNKR) are a coiled coil.

Belongs to the eIF-3 subunit B family. As to quaternary structure, component of the eukaryotic translation initiation factor 3 (eIF-3) complex. The eIF-3 complex interacts with pix. Interacts with mxt.

It is found in the cytoplasm. RNA-binding component of the eukaryotic translation initiation factor 3 (eIF-3) complex, which is involved in protein synthesis of a specialized repertoire of mRNAs and, together with other initiation factors, stimulates binding of mRNA and methionyl-tRNAi to the 40S ribosome. The eIF-3 complex specifically targets and initiates translation of a subset of mRNAs involved in cell proliferation. In Drosophila pseudoobscura pseudoobscura (Fruit fly), this protein is Eukaryotic translation initiation factor 3 subunit B.